Here is a 349-residue protein sequence, read N- to C-terminus: Protein BCCIP homolog (349 aa).

Over residues 1-10 the composition is skewed to basic residues; sequence MGRVFKKKGG. A disordered region spans residues 1–65; sequence MGRVFKKKGG…DDEEEDEDEQ (65 aa). Residues 11-33 show a composition bias toward basic and acidic residues; that stretch reads AKREAEEEKQEELVMRKKLRKEE. A compositionally biased stretch (acidic residues) spans 34–65; sequence EPEPVEDVEEDEDVSDEDDEDIDDEEEDEDEQ.

This sequence belongs to the BCP1 family.

The polypeptide is Protein BCCIP homolog (Caenorhabditis elegans).